The chain runs to 226 residues: Triosephosphate isomerase (226 aa).

Residue N12–K14 participates in substrate binding. H96 functions as the Electrophile in the catalytic mechanism. E144 serves as the catalytic Proton acceptor. Substrate contacts are provided by residues I149, G184, and A205–S206.

The protein belongs to the triosephosphate isomerase family. In terms of assembly, homotetramer; dimer of dimers.

It localises to the cytoplasm. The catalysed reaction is D-glyceraldehyde 3-phosphate = dihydroxyacetone phosphate. It functions in the pathway carbohydrate biosynthesis; gluconeogenesis. It participates in carbohydrate degradation; glycolysis; D-glyceraldehyde 3-phosphate from glycerone phosphate: step 1/1. In terms of biological role, involved in the gluconeogenesis. Catalyzes stereospecifically the conversion of dihydroxyacetone phosphate (DHAP) to D-glyceraldehyde-3-phosphate (G3P). In Thermococcus kodakarensis (strain ATCC BAA-918 / JCM 12380 / KOD1) (Pyrococcus kodakaraensis (strain KOD1)), this protein is Triosephosphate isomerase.